Reading from the N-terminus, the 94-residue chain is Large ribosomal subunit protein uL23 (94 aa).

Belongs to the universal ribosomal protein uL23 family. As to quaternary structure, part of the 50S ribosomal subunit. Contacts protein L29, and trigger factor when it is bound to the ribosome.

One of the early assembly proteins it binds 23S rRNA. One of the proteins that surrounds the polypeptide exit tunnel on the outside of the ribosome. Forms the main docking site for trigger factor binding to the ribosome. The sequence is that of Large ribosomal subunit protein uL23 from Treponema denticola (strain ATCC 35405 / DSM 14222 / CIP 103919 / JCM 8153 / KCTC 15104).